The chain runs to 355 residues: MIEKLQVIEEKYLELEKKISDPEIISQPQEWQKLMKEHSNLQPIVEKFREYKRILDTIKEAEELLDTDLDEDFEKLVKEELNRAKEQKEIVETQLKILLLPKDPNDEKNVIMEIRAGAGGEEAALFAAELFRMYSRYAERKNWKVEVMSTSESDLDGFKEVIFMISGKGAYSRLKYESGVHRVQRVPVTESGGRIHTSTATVAVLPEVEDVEVEIREEDLEIDTFRAGGAGGQHVNKTESAVRIVHKPTGIVVTCQDERSQHANRDRAMKILRARLYDYYQSIQQKEIESQRRSQVGTGDRSERIRTYNFPQGRVTDHRIGLTLYKLEQILDGELDEIIDALITHFQTERLKEIG.

Position 233 is an N5-methylglutamine (glutamine 233).

This sequence belongs to the prokaryotic/mitochondrial release factor family. Post-translationally, methylated by PrmC. Methylation increases the termination efficiency of RF1.

It is found in the cytoplasm. In terms of biological role, peptide chain release factor 1 directs the termination of translation in response to the peptide chain termination codons UAG and UAA. In Caldicellulosiruptor bescii (strain ATCC BAA-1888 / DSM 6725 / KCTC 15123 / Z-1320) (Anaerocellum thermophilum), this protein is Peptide chain release factor 1.